We begin with the raw amino-acid sequence, 572 residues long: Phosphoenolpyruvate-protein phosphotransferase (572 aa).

The active-site Tele-phosphohistidine intermediate is histidine 191. The phosphoenolpyruvate site is built by arginine 298 and arginine 334. Mg(2+)-binding residues include glutamate 433 and aspartate 457. Residues asparagine 456–aspartate 457 and arginine 467 each bind phosphoenolpyruvate. The active-site Proton donor is the cysteine 504.

It belongs to the PEP-utilizing enzyme family. As to quaternary structure, homodimer. Mg(2+) is required as a cofactor.

It localises to the cytoplasm. The enzyme catalyses L-histidyl-[protein] + phosphoenolpyruvate = N(pros)-phospho-L-histidyl-[protein] + pyruvate. Functionally, general (non sugar-specific) component of the phosphoenolpyruvate-dependent sugar phosphotransferase system (sugar PTS). This major carbohydrate active-transport system catalyzes the phosphorylation of incoming sugar substrates concomitantly with their translocation across the cell membrane. Enzyme I transfers the phosphoryl group from phosphoenolpyruvate (PEP) to the phosphoryl carrier protein (HPr). The protein is Phosphoenolpyruvate-protein phosphotransferase (ptsI) of Staphylococcus aureus (strain MRSA252).